A 196-amino-acid chain; its full sequence is Shikimate kinase (196 aa).

32-37 (GAGKSA) lines the ATP pocket. A Mg(2+)-binding site is contributed by S36. Positions 54, 78, and 100 each coordinate substrate. R138 is an ATP binding site. A substrate-binding site is contributed by R157. Position 174 (R174) interacts with ATP.

The protein belongs to the shikimate kinase family. In terms of assembly, monomer. Mg(2+) is required as a cofactor.

The protein localises to the cytoplasm. It carries out the reaction shikimate + ATP = 3-phosphoshikimate + ADP + H(+). Its pathway is metabolic intermediate biosynthesis; chorismate biosynthesis; chorismate from D-erythrose 4-phosphate and phosphoenolpyruvate: step 5/7. Catalyzes the specific phosphorylation of the 3-hydroxyl group of shikimic acid using ATP as a cosubstrate. The sequence is that of Shikimate kinase from Rhizobium leguminosarum bv. trifolii (strain WSM2304).